The primary structure comprises 224 residues: Thiamine-triphosphatase (224 aa).

Ala2 carries the N-acetylalanine modification. The region spanning Leu5–Phe201 is the CYTH domain. Mg(2+)-binding residues include Glu7 and Glu9. Substrate-binding residues include Lys11, Arg55, Arg57, Lys65, and Arg125. The Mg(2+) site is built by Asp145, Glu157, and Glu159. Position 157 (Glu157) interacts with substrate. Lys193 contributes to the substrate binding site.

Belongs to the ThTPase family. In terms of assembly, monomer. Mg(2+) serves as cofactor.

Its subcellular location is the cytoplasm. It catalyses the reaction thiamine triphosphate + H2O = thiamine diphosphate + phosphate + H(+). In terms of biological role, hydrolase highly specific for thiamine triphosphate (ThTP). The protein is Thiamine-triphosphatase (Thtpa) of Rattus norvegicus (Rat).